A 529-amino-acid chain; its full sequence is BAR/IMD domain-containing adapter protein 2-like 2 (529 aa).

An IMD domain is found at 1 to 239 (MAPEMDQFYR…HSPGLLGPVL (239 aa)). Disordered regions lie at residues 221–332 (EASR…GGAR) and 399–529 (NPLN…PLIR). Phosphoserine is present on residues serine 231, serine 272, and serine 304. The segment covering 301 to 317 (SASSLYSSSTQRSRSNS) has biased composition (low complexity). The span at 321-331 (RPGGGGGGGGA) shows a compositional bias: gly residues. Positions 329-392 (GGARRVRALV…PEAYVKPLDE (64 aa)) constitute an SH3 domain. Positions 439–459 (GNSTASSDYWDGQSRSRTPSH) are enriched in polar residues. Residues 473 to 484 (PSSRRSSMGSMG) are compositionally biased toward low complexity. Phosphoserine occurs at positions 479 and 482.

It is found in the cell membrane. The protein localises to the cell junction. It localises to the cytoplasmic vesicle membrane. Functionally, phosphoinositides-binding protein that induces the formation of planar or gently curved membrane structures. Binds to phosphoinositides, including to phosphatidylinositol 4,5-bisphosphate (PtdIns(4,5)P2) headgroups. There seems to be no clear preference for a specific phosphoinositide. The protein is BAR/IMD domain-containing adapter protein 2-like 2 (BAIAP2L2) of Bos taurus (Bovine).